The following is a 327-amino-acid chain: Phenylalanine--tRNA ligase alpha subunit (327 aa).

Glu252 contributes to the Mg(2+) binding site.

This sequence belongs to the class-II aminoacyl-tRNA synthetase family. Phe-tRNA synthetase alpha subunit type 1 subfamily. As to quaternary structure, tetramer of two alpha and two beta subunits. Mg(2+) serves as cofactor.

It is found in the cytoplasm. It catalyses the reaction tRNA(Phe) + L-phenylalanine + ATP = L-phenylalanyl-tRNA(Phe) + AMP + diphosphate + H(+). The polypeptide is Phenylalanine--tRNA ligase alpha subunit (Klebsiella pneumoniae subsp. pneumoniae (strain ATCC 700721 / MGH 78578)).